A 789-amino-acid chain; its full sequence is MLSLRVTCLILSVASTVWTTDTEDKGEFLSEGGGVRGPRVVERHQSQCKDSDWPFCSDDDWNHKCPSGCRMKGLIDEANQDFTNRINKLKNSLFDFQRNNKDSNSLTRNIMEYLRGDFANANNFDNTYGQVSEDLRRRIEILRRKVIEKAQQIQALQSNVRAQLIDMKRLEVDIDIKIRSCKGSCSRAVNREINLQDYEGHQKQLQQVIAKELLPTKDRQYLPALKMSPVPDLVPGSFKSQLQEAPPEWKALTEMRQMRMELERPGKDGGSRGDSPGDSRGDSRGDFATRGPGSKAENPTNPGPGGSGYWRPGNSGSGSDGNRNPGTTGSDGTGDWGTGSPRPGSDSGNFRPANPNWGVFSEFGDSSSPATRKEYHTGKAVTSKGDKELLIGKEKVTSSGTSTTHRSCSKTITKTVTGPDGRREVVKEVITSDDGSDCGDATELDISHSFSGSLDELSERHPDLSGFFDNHFGLISPNFKEFGSKTHSDSDILTNIEDPSSHVPEFSSSSKTSTVKKQVTKTYKMADEAGSEAHREGETRNTKRGRARARPTRDCDDVLQTQTSGAQNGIFSIKPPGSSKVFSVYCDQETSLGGWLLIQQRMDGSLNFNRTWQDYKRGFGSLNDKGEGEFWLGNDYLHLLTLRGSVLRVELEDWAGKEAYAEYHFRVGSEAEGYALQVSSYRGTAGDALVQGSVEEGTEYTSHSNMQFSTFDRDADQWEENCAEVYGGGWWYNSCQAANLNGIYYPGGTYDPRNNSPYEIENGVVWVPFRGADYSLRAVRMKIRPLVGQ.

The signal sequence occupies residues M1 to T19. S46 is modified (phosphoserine). Residues C69–D554 adopt a coiled-coil conformation. Composition is skewed to basic and acidic residues over residues E263–F287 and K384–V396. Positions E263–D420 are disordered. Over residues T397–V416 the composition is skewed to polar residues. An intrachain disulfide couples C408 to C438. A Phosphoserine modification is found at S447. P504 carries the post-translational modification 4-hydroxyproline; by P4HA1. Over residues A526–N541 the composition is skewed to basic and acidic residues. Residues A526–C555 are disordered. Residues R546 to V787 form the Fibrinogen C-terminal domain. N-linked (GlcNAc...) asparagine glycosylation occurs at N609. 4 residues coordinate Ca(2+): D714, D716, W718, and E720. C722 and C735 are oxidised to a cystine.

In terms of assembly, heterohexamer; disulfide linked. Contains 2 sets of 3 non-identical chains (alpha, beta and gamma). The 2 heterotrimers are in head to head conformation with the N-termini in a small central domain. Conversion of fibrinogen to fibrin is triggered by thrombin, which cleaves fibrinopeptides A and B from alpha and beta chains, and thus exposes the N-terminal polymerization sites responsible for the formation of the soft clot. The soft clot is converted into the hard clot by factor XIIIA which catalyzes the epsilon-(gamma-glutamyl)lysine cross-linking between gamma chains (stronger) and between alpha chains (weaker) of different monomers. In terms of processing, forms F13A-mediated cross-links between a glutamine and the epsilon-amino group of a lysine residue, forming fibronectin-fibrinogen heteropolymers. Post-translationally, phosphorylated by FAM20C in the extracellular medium. In terms of tissue distribution, expressed in liver.

It is found in the secreted. Cleaved by the protease thrombin to yield monomers which, together with fibrinogen beta (FGB) and fibrinogen gamma (FGG), polymerize to form an insoluble fibrin matrix. Fibrin has a major function in hemostasis as one of the primary components of blood clots. In addition, functions during the early stages of wound repair to stabilize the lesion and guide cell migration during re-epithelialization. Was originally thought to be essential for platelet aggregation, based on in vitro studies using anticoagulated blood. However, subsequent studies have shown that it is not absolutely required for thrombus formation in vivo. Enhances expression of SELP in activated platelets via an ITGB3-dependent pathway. Maternal fibrinogen is essential for successful pregnancy. Fibrin deposition is also associated with infection, where it protects against IFNG-mediated hemorrhage. May also facilitate the immune response via both innate and T-cell mediated pathways. The protein is Fibrinogen alpha chain of Mus musculus (Mouse).